The sequence spans 659 residues: ATP-binding cassette sub-family D member 3 (659 aa).

Residues 2–61 (AAFSKYLTARNSSLAGAAFLLFCLLHKRRRALGLHGKKSGKPPLQNNEKEGKKERAVVDK) are interaction with PEX19. Asparagine 12 carries an N-linked (GlcNAc...) asparagine glycan. The residue at position 61 (lysine 61) is an N6-acetyllysine. A helical membrane pass occupies residues 84–104 (GYLILIAVMLVSRTYCDVWMI). The 288-residue stretch at 85-372 (YLILIAVMLV…MLLRMSQALG (288 aa)) folds into the ABC transmembrane type-1 domain. Asparagine 106 carries N-linked (GlcNAc...) asparagine glycosylation. A helical membrane pass occupies residues 126–146 (LFNFIAAMPLISLVNNFLKYG). Asparagine 206 carries N-linked (GlcNAc...) asparagine glycosylation. The chain crosses the membrane as a helical span at residues 224 to 244 (AIGAQGPASMMAYLLVSGLFL). The residue at position 260 (lysine 260) is an N6-acetyllysine. A helical transmembrane segment spans residues 313–333 (MGFIDSIIAKYIATVVGYLVV). At lysine 399 the chain carries N6-acetyllysine. Phosphoserine is present on serine 424. The ABC transporter domain maps to 434 to 659 (INADNIIKFD…ITEDTVEFGS (226 aa)). 473–480 (GPNGCGKS) is an ATP binding site. Lysine 533 is subject to N6-acetyllysine. Serine 659 bears the Phosphoserine mark.

The protein belongs to the ABC transporter superfamily. ABCD family. Peroxisomal fatty acyl CoA transporter (TC 3.A.1.203) subfamily. As to quaternary structure, homodimers. Can form heterodimers with ABCD1 and ABCD2. Dimerization is necessary to form an active transporter. Interacts with PEX19; mediates the targeting of ABCD3 to peroxisomes. Ubiquitinated by PEX2 during pexophagy in response to starvation, leading to its degradation.

It localises to the peroxisome membrane. The catalysed reaction is a very long-chain fatty acyl-CoA + H2O = a very long-chain fatty acid + CoA + H(+). The enzyme catalyses a very long-chain fatty acid(in) + ATP + H2O = a very long-chain fatty acid(out) + ADP + phosphate + H(+). It carries out the reaction a long-chain fatty acyl-CoA + H2O = a long-chain fatty acid + CoA + H(+). It catalyses the reaction a long-chain fatty acid(in) + ATP + H2O = a long-chain fatty acid(out) + ADP + phosphate + H(+). The catalysed reaction is pristanoyl-CoA + H2O = 2,6,10,14-tetramethylpentadecanoate + CoA + H(+). The enzyme catalyses 2,6,10,14-tetramethylpentadecanoate(in) + ATP + H2O = 2,6,10,14-tetramethylpentadecanoate(out) + ADP + phosphate + H(+). It carries out the reaction hexadecanedioyl-CoA + H2O = hexadecanedioate + CoA + H(+). It catalyses the reaction hexadecanedioate(in) + ATP + H2O = hexadecanedioate(out) + ADP + phosphate + H(+). The catalysed reaction is (5Z,8Z,11Z,14Z,17Z)-eicosapentaenoyl-CoA + H2O = (5Z,8Z,11Z,14Z,17Z)-eicosapentaenoate + CoA + H(+). The enzyme catalyses (5Z,8Z,11Z,14Z,17Z)-eicosapentaenoate(in) + ATP + H2O = (5Z,8Z,11Z,14Z,17Z)-eicosapentaenoate(out) + ADP + phosphate + H(+). It carries out the reaction (4Z,7Z,10Z,13Z,16Z,19Z)-docosahexaenoyl-CoA + H2O = (4Z,7Z,10Z,13Z,16Z,19Z)-docosahexaenoate + CoA + H(+). It catalyses the reaction (4Z,7Z,10Z,13Z,16Z,19Z)-docosahexaenoate(in) + ATP + H2O = (4Z,7Z,10Z,13Z,16Z,19Z)-docosahexaenoate(out) + ADP + phosphate + H(+). Its function is as follows. Broad substrate specificity ATP-dependent transporter of the ATP-binding cassette (ABC) family that catalyzes the transport of long-chain fatty acids (LCFA)-CoA, dicarboxylic acids-CoA, long-branched-chain fatty acids-CoA and bile acids from the cytosol to the peroxisome lumen for beta-oxydation. Has fatty acyl-CoA thioesterase and ATPase activities. Probably hydrolyzes fatty acyl-CoAs into free fatty acids prior to their ATP-dependent transport into peroxisomes. Thus, play a role in regulation of LCFAs and energy metabolism namely, in the degradation and biosynthesis of fatty acids by beta-oxidation. In Rattus norvegicus (Rat), this protein is ATP-binding cassette sub-family D member 3 (Abcd3).